A 67-amino-acid polypeptide reads, in one-letter code: ATP synthase F(0) complex subunit 8 (67 aa).

A helical transmembrane segment spans residues 8-24 (TWFTTVLASSITLFILM). Residue Lys54 is modified to N6-acetyllysine; alternate. The residue at position 54 (Lys54) is an N6-succinyllysine; alternate. Lys57 is subject to N6-acetyllysine.

Belongs to the ATPase protein 8 family. In terms of assembly, component of the ATP synthase complex composed at least of ATP5F1A/subunit alpha, ATP5F1B/subunit beta, ATP5MC1/subunit c (homooctomer), MT-ATP6/subunit a, MT-ATP8/subunit 8, ATP5ME/subunit e, ATP5MF/subunit f, ATP5MG/subunit g, ATP5MK/subunit k, ATP5MJ/subunit j, ATP5F1C/subunit gamma, ATP5F1D/subunit delta, ATP5F1E/subunit epsilon, ATP5PF/subunit F6, ATP5PB/subunit b, ATP5PD/subunit d, ATP5PO/subunit OSCP. ATP synthase complex consists of a soluble F(1) head domain (subunits alpha(3) and beta(3)) - the catalytic core - and a membrane F(0) domain - the membrane proton channel (subunits c, a, 8, e, f, g, k and j). These two domains are linked by a central stalk (subunits gamma, delta, and epsilon) rotating inside the F1 region and a stationary peripheral stalk (subunits F6, b, d, and OSCP). Interacts with PRICKLE3.

The protein localises to the mitochondrion membrane. Subunit 8, of the mitochondrial membrane ATP synthase complex (F(1)F(0) ATP synthase or Complex V) that produces ATP from ADP in the presence of a proton gradient across the membrane which is generated by electron transport complexes of the respiratory chain. ATP synthase complex consist of a soluble F(1) head domain - the catalytic core - and a membrane F(1) domain - the membrane proton channel. These two domains are linked by a central stalk rotating inside the F(1) region and a stationary peripheral stalk. During catalysis, ATP synthesis in the catalytic domain of F(1) is coupled via a rotary mechanism of the central stalk subunits to proton translocation. In vivo, can only synthesize ATP although its ATP hydrolase activity can be activated artificially in vitro. Part of the complex F(0) domain. In Cricetulus griseus (Chinese hamster), this protein is ATP synthase F(0) complex subunit 8.